A 187-amino-acid chain; its full sequence is Troponin I, slow skeletal muscle (187 aa).

Residue P2 is modified to N-acetylproline. The interval 2–48 (PEVERKPKITASRKLLLKSLMLAKAKECWEQEHEEREAEKVRYLAER) is involved in binding TNC. S58 carries the post-translational modification Phosphoserine. Positions 97 to 118 (LKLKVMDLRGKFKRPPLRRVRV) are involved in binding TNC and actin.

The protein belongs to the troponin I family. As to quaternary structure, binds to actin and tropomyosin. In terms of tissue distribution, highest levels observed in human skeletal muscle (e.g. gastrocnemious muscle), differentiated cultures of primary human muscle cells and rhabdomyosarcoma cells cultured in low serum medium. Expressed in C2 muscle cell myoblasts and myotubes.

Functionally, troponin I is the inhibitory subunit of troponin, the thin filament regulatory complex which confers calcium-sensitivity to striated muscle actomyosin ATPase activity. The polypeptide is Troponin I, slow skeletal muscle (TNNI1) (Homo sapiens (Human)).